Consider the following 898-residue polypeptide: Alanine--tRNA ligase (898 aa).

Residues His-584, His-588, Cys-686, and His-690 each coordinate Zn(2+).

It belongs to the class-II aminoacyl-tRNA synthetase family. Zn(2+) serves as cofactor.

Its subcellular location is the cytoplasm. It catalyses the reaction tRNA(Ala) + L-alanine + ATP = L-alanyl-tRNA(Ala) + AMP + diphosphate. Its function is as follows. Catalyzes the attachment of alanine to tRNA(Ala) in a two-step reaction: alanine is first activated by ATP to form Ala-AMP and then transferred to the acceptor end of tRNA(Ala). Also edits incorrectly charged Ser-tRNA(Ala) and Gly-tRNA(Ala) via its editing domain. The polypeptide is Alanine--tRNA ligase (Myxococcus xanthus (strain DK1622)).